A 78-amino-acid polypeptide reads, in one-letter code: Delta-conotoxin-like TxMKLT1-0111 (78 aa).

The N-terminal stretch at 1–22 (MKLTCMMIVAVLFLTAWTFATA) is a signal peptide. Positions 23–49 (DDSGNGLENLFSNAHHQMKNPEASKLN) are excised as a propeptide. Disulfide bonds link C53–C68, C60–C72, and C67–C77.

It belongs to the conotoxin O1 superfamily. Expressed by the venom duct.

The protein resides in the secreted. Functionally, delta-conotoxins bind to site 6 of voltage-gated sodium channels (Nav) and inhibit the inactivation process. The sequence is that of Delta-conotoxin-like TxMKLT1-0111 from Conus textile (Cloth-of-gold cone).